The following is a 785-amino-acid chain: Protein kintoun (785 aa).

2 stretches are compositionally biased toward basic and acidic residues: residues 622–638 (EHNE…RDTS) and 662–679 (HNIE…KEPK). Disordered stretches follow at residues 622-698 (EHNE…DSHL) and 719-749 (KSSV…ASSN). The segment covering 681 to 695 (TSCTAESTSGQQPND) has biased composition (polar residues). Over residues 728 to 737 (SDLDEDDMPD) the composition is skewed to acidic residues.

This sequence belongs to the PIH1 family. Kintoun subfamily.

The protein localises to the cytoplasm. Its subcellular location is the dynein axonemal particle. Functionally, required for cytoplasmic pre-assembly of axonemal dyneins, thereby playing a central role in motility in cilia and flagella. Involved in pre-assembly of dynein arm complexes in the cytoplasm before intraflagellar transport loads them for the ciliary compartment. The chain is Protein kintoun from Xenopus tropicalis (Western clawed frog).